Here is a 266-residue protein sequence, read N- to C-terminus: Glucosamine-6-phosphate deaminase (266 aa).

Asp-72 functions as the Proton acceptor; for enolization step in the catalytic mechanism. Asp-141 (for ring-opening step) is an active-site residue. His-143 serves as the catalytic Proton acceptor; for ring-opening step. Glu-148 (for ring-opening step) is an active-site residue.

Belongs to the glucosamine/galactosamine-6-phosphate isomerase family. NagB subfamily. As to quaternary structure, homohexamer.

The catalysed reaction is alpha-D-glucosamine 6-phosphate + H2O = beta-D-fructose 6-phosphate + NH4(+). It participates in amino-sugar metabolism; N-acetylneuraminate degradation; D-fructose 6-phosphate from N-acetylneuraminate: step 5/5. With respect to regulation, allosterically activated by N-acetylglucosamine 6-phosphate (GlcNAc6P). Catalyzes the reversible isomerization-deamination of glucosamine 6-phosphate (GlcN6P) to form fructose 6-phosphate (Fru6P) and ammonium ion. The chain is Glucosamine-6-phosphate deaminase from Enterobacter sp. (strain 638).